Here is a 681-residue protein sequence, read N- to C-terminus: T-box-containing protein 2 (681 aa).

A DNA-binding region (T-box) is located at residues Leu-149–Glu-323. Disordered regions lie at residues Pro-316 to Arg-351, Gly-456 to Asn-489, Pro-521 to Gly-558, and Glu-589 to Gly-611. Residues Asn-470 to Asn-489 show a composition bias toward low complexity. Polar residues predominate over residues Pro-521–His-534.

As to quaternary structure, monomer. Differentiating muscle and tailbud tip.

Its subcellular location is the nucleus. Involved in the transcriptional regulation of genes required for muscle differentiation. Binds to a palindromic site (called T site) and activates gene transcription when bound to such a site. This chain is T-box-containing protein 2 (T2), found in Halocynthia roretzi (Sea squirt).